The following is a 448-amino-acid chain: Tryptophan dimethylallyltransferase 1 (448 aa).

L-tryptophan contacts are provided by residues 80–81 (IL) and Glu-89. Substrate is bound by residues Arg-100, Lys-186, and Tyr-188. Tyr-190 and Arg-251 together coordinate L-tryptophan. Residues Arg-264, Lys-266, Tyr-268, Gln-350, Tyr-352, Tyr-416, and Tyr-420 each coordinate substrate.

Belongs to the tryptophan dimethylallyltransferase family. Homodimer.

It catalyses the reaction L-tryptophan + dimethylallyl diphosphate = 4-(3-methylbut-2-enyl)-L-tryptophan + diphosphate. It functions in the pathway alkaloid biosynthesis; ergot alkaloid biosynthesis. Catalyzes the first step of ergot alkaloid biosynthesis. Ergot alkaloids, which are produced by endophyte fungi, can enhance plant host fitness, but also cause livestock toxicosis to host plants. The chain is Tryptophan dimethylallyltransferase 1 (dmaW1) from Epichloe coenophiala (Tall fescue endophyte fungus).